A 264-amino-acid chain; its full sequence is NAD kinase 1 (264 aa).

Aspartate 45 functions as the Proton acceptor in the catalytic mechanism. NAD(+) is bound by residues 45 to 46, 122 to 123, arginine 148, aspartate 150, 161 to 166, and alanine 185; these read DG, NE, and TAYNKS.

Belongs to the NAD kinase family. Requires a divalent metal cation as cofactor.

The protein resides in the cytoplasm. It catalyses the reaction NAD(+) + ATP = ADP + NADP(+) + H(+). Its function is as follows. Involved in the regulation of the intracellular balance of NAD and NADP, and is a key enzyme in the biosynthesis of NADP. Catalyzes specifically the phosphorylation on 2'-hydroxyl of the adenosine moiety of NAD to yield NADP. In Listeria innocua serovar 6a (strain ATCC BAA-680 / CLIP 11262), this protein is NAD kinase 1.